Consider the following 528-residue polypeptide: Phosphoenolpyruvate carboxykinase (ATP) (528 aa).

Substrate contacts are provided by Arg-56, Tyr-192, and Lys-198. Residues Lys-198, His-217, and 233–241 (GLSGTGKTT) each bind ATP. Mn(2+) contacts are provided by Lys-198 and His-217. Asp-254 contacts Mn(2+). Glu-282, Arg-319, and Thr-444 together coordinate ATP. A substrate-binding site is contributed by Arg-319.

This sequence belongs to the phosphoenolpyruvate carboxykinase (ATP) family. Requires Mn(2+) as cofactor.

Its subcellular location is the cytoplasm. The enzyme catalyses oxaloacetate + ATP = phosphoenolpyruvate + ADP + CO2. It functions in the pathway carbohydrate biosynthesis; gluconeogenesis. Functionally, involved in the gluconeogenesis. Catalyzes the conversion of oxaloacetate (OAA) to phosphoenolpyruvate (PEP) through direct phosphoryl transfer between the nucleoside triphosphate and OAA. This is Phosphoenolpyruvate carboxykinase (ATP) from Bacillus cytotoxicus (strain DSM 22905 / CIP 110041 / 391-98 / NVH 391-98).